We begin with the raw amino-acid sequence, 457 residues long: tRNA-2-methylthio-N(6)-dimethylallyladenosine synthase (457 aa).

Residues 3–120 (KKVYVKTFGC…LPQMIDARRA (118 aa)) enclose the MTTase N-terminal domain. [4Fe-4S] cluster contacts are provided by C12, C49, C83, C157, C161, and C164. One can recognise a Radical SAM core domain in the interval 143-377 (RVEGPSAFVS…QATIEENVAR (235 aa)). One can recognise a TRAM domain in the interval 380 to 447 (QSMVGKVERI…PHSLRGELVI (68 aa)).

It belongs to the methylthiotransferase family. MiaB subfamily. As to quaternary structure, monomer. [4Fe-4S] cluster is required as a cofactor.

Its subcellular location is the cytoplasm. It catalyses the reaction N(6)-dimethylallyladenosine(37) in tRNA + (sulfur carrier)-SH + AH2 + 2 S-adenosyl-L-methionine = 2-methylsulfanyl-N(6)-dimethylallyladenosine(37) in tRNA + (sulfur carrier)-H + 5'-deoxyadenosine + L-methionine + A + S-adenosyl-L-homocysteine + 2 H(+). Catalyzes the methylthiolation of N6-(dimethylallyl)adenosine (i(6)A), leading to the formation of 2-methylthio-N6-(dimethylallyl)adenosine (ms(2)i(6)A) at position 37 in tRNAs that read codons beginning with uridine. This chain is tRNA-2-methylthio-N(6)-dimethylallyladenosine synthase, found in Burkholderia cenocepacia (strain ATCC BAA-245 / DSM 16553 / LMG 16656 / NCTC 13227 / J2315 / CF5610) (Burkholderia cepacia (strain J2315)).